We begin with the raw amino-acid sequence, 465 residues long: GTPase Der (465 aa).

2 EngA-type G domains span residues 3 to 167 (PLVA…PEEG) and 179 to 352 (VRIA…ASAT). GTP-binding positions include 9-16 (GRPNVGKS), 57-61 (DTGGI), 119-122 (NKID), 185-192 (GRPNVGKS), 232-236 (DTAGL), and 297-300 (NKWD). The region spanning 353 to 437 (HEFSTSEVNQ…PVCFIFREGA (85 aa)) is the KH-like domain.

The protein belongs to the TRAFAC class TrmE-Era-EngA-EngB-Septin-like GTPase superfamily. EngA (Der) GTPase family. As to quaternary structure, associates with the 50S ribosomal subunit.

Its function is as follows. GTPase that plays an essential role in the late steps of ribosome biogenesis. The chain is GTPase Der from Xanthomonas oryzae pv. oryzae (strain MAFF 311018).